Reading from the N-terminus, the 310-residue chain is MLLILLSVALLALSSAESSSEDVSQEESLFLISGKPEGRRPQGGNQPQRPPPPPGKPQGPPPQGGNQSQGPPPPPGKPEGRPPQGGNQSQGPPPHPGKPERPPPQGGNQSQGPPPHPGKPESRPPQGGHQSQGPPPTPGKPEGPPPQGGNQSQGTPPPPGKPEGRPPQGGNQSQGPPPHPGKPERPPPQGGNQSHRPPPPPGKPERPPPQGGNQSQGPPPHPGKPEGPPPQEGNKSRSARSPPGKPQGPPQQEGNKPQGPPPPGKPQGPPPAGGNPQQPQAPPAGKPQGPPPPPQGGRPPRPAQGQQPPQ.

The first 16 residues, 1 to 16 (MLLILLSVALLALSSA), serve as a signal peptide directing secretion. A disordered region spans residues 14–310 (SSAESSSEDV…RPAQGQQPPQ (297 aa)). 9 repeat units span residues 35–55 (KPEG…PPPG), 56–76 (KPQG…PPPG), 77–97 (KPEG…PHPG), 98–118 (KPER…PHPG), 119–139 (KPES…PTPG), 140–160 (KPEG…PPPG), 161–181 (KPEG…PHPG), 182–202 (KPER…PPPG), and 203–223 (KPER…PHPG). The segment at 35-234 (KPEGRRPQGG…PEGPPPQEGN (200 aa)) is 9.5 X 21 AA tandem repeats of K-P-[EQ]-[GR]-[PR]-[PR]-P-Q-G-G-N-Q-[PS]-[QH]-[RG]-[PT]-P-P-[PH]-P-G. Pro residues predominate over residues 48 to 63 (QRPPPPPGKPQGPPPQ). Asn66, Asn87, and Asn108 each carry an N-linked (GlcNAc...) asparagine glycan. Residues 133–147 (GPPPTPGKPEGPPPQ) show a composition bias toward pro residues. Asn150, Asn171, and Asn192 each carry an N-linked (GlcNAc...) asparagine glycan. The segment covering 196–210 (RPPPPPGKPERPPPQ) has biased composition (pro residues). Asn213 carries N-linked (GlcNAc...) asparagine glycosylation. The span at 217-231 (GPPPHPGKPEGPPPQ) shows a compositional bias: pro residues. One copy of the 10; truncated repeat lies at 224 to 234 (KPEGPPPQEGN). Asn234 carries N-linked (GlcNAc...) asparagine glycosylation. Residues 258-310 (QGPPPPGKPQGPPPAGGNPQQPQAPPAGKPQGPPPPPQGGRPPRPAQGQQPPQ) are compositionally biased toward pro residues.

In terms of processing, N-glycosylated. Proteolytically cleaved at the tripeptide Xaa-Pro-Gln, where Xaa in the P(3) position is mostly lysine. The endoprotease may be of microbial origin. Pyroglutamate formation found on at least Gln-46, Gln-48, Gln-67, Gln-88; Gln-90; Gln-193; Gln-288 Gln-214 and Gln-295, preferentially in diabetic, and head and neck cancer patients.

The protein localises to the secreted. In Homo sapiens (Human), this protein is Basic salivary proline-rich protein 4 (PRB4).